Consider the following 316-residue polypeptide: uncharacterized protein (316 aa).

Residues 285–316 form a disordered region; sequence APEGDLGDIIEVDPSEPRSDPYRRLRTPPPGG. A compositionally biased stretch (acidic residues) spans 289–298; that stretch reads DLGDIIEVDP.

Possibly necessary for replication. This is an uncharacterized protein from Halobacterium salinarum (Halobacterium halobium).